The chain runs to 585 residues: Arginine--tRNA ligase (585 aa).

Positions 127-137 (PNTNKPLHVGH) match the 'HIGH' region motif.

It belongs to the class-I aminoacyl-tRNA synthetase family. Monomer.

Its subcellular location is the cytoplasm. It catalyses the reaction tRNA(Arg) + L-arginine + ATP = L-arginyl-tRNA(Arg) + AMP + diphosphate. The protein is Arginine--tRNA ligase of Borreliella afzelii (strain PKo) (Borrelia afzelii).